The primary structure comprises 397 residues: Teichoic acid D-alanine hydrolase (397 aa).

The N-terminal stretch at 1-23 is a signal peptide; it reads MKFNKVKLVIHACVLLFIIISIA.

It localises to the cell membrane. The enzyme catalyses [(4-D-Ala)-(2-GlcNAc)-Rib-ol-P]n-[Gro-P]m-beta-D-ManNAc-(1-&gt;4)-alpha-D-GlcNAc-P-peptidoglycan + n H2O = [(2-GlcNAc)-Rib-ol-P]n-[Gro-P]m-beta-D-ManNAc-(1-&gt;4)-alpha-D-GlcNAc-P-peptidoglycan + n D-alanine.. Its function is as follows. Catalyzes the liberation of D-alanyl moieties present on wall teichoic acid (WTA) and lipoteichoic acid (LTA). Affects the methicillin resistance level and autolysis in the presence of Triton X-100 as well as the cell wall structure. The chain is Teichoic acid D-alanine hydrolase (fmtA) from Staphylococcus aureus (strain NCTC 8325 / PS 47).